Consider the following 572-residue polypeptide: Putative lysozyme-like protein (572 aa).

The first 17 residues, 1-17 (MRLLLVLLALIFSVVSA), serve as a signal peptide directing secretion. Residues 145–165 (MSSSGSSSSSGSSGSSSSSSG) are compositionally biased toward low complexity. Disordered stretches follow at residues 145-199 (MSSS…HGGG), 231-297 (SSSS…GGGV), 326-388 (ANSV…GERK), and 433-469 (AGSS…GGSG). Gly residues predominate over residues 166–185 (SSGGGSSGGGSGGGGGGSGL). Residues 231-240 (SSSSADAGSS) show a composition bias toward low complexity. Over residues 258-282 (STGGTGGSSGSSGGGSGGGGGGSGL) the composition is skewed to gly residues. Residues 326-358 (ANSVSSLAGSMSSSGSSSSSGSSGSSSSSSSSG) are compositionally biased toward low complexity. Positions 359 to 382 (SSGGSSGGGSSGGGSGGGGGGSGL) are enriched in gly residues. Low complexity predominate over residues 433–452 (AGSSSSSGSSGSSSSSSSSG). Over residues 453-469 (SSGGSSGGSSGGGGGSG) the composition is skewed to gly residues.

This sequence belongs to the dictyostelium lysozyme family.

The sequence is that of Putative lysozyme-like protein (alyL) from Dictyostelium discoideum (Social amoeba).